We begin with the raw amino-acid sequence, 187 residues long: Resolvase OPG149 (187 aa).

It belongs to the RuvC family. Poxviruses-type subfamily. The cofactor is Mg(2+).

Plays a role in DNA replication by cleaving viral DNA concatamers to yield unit-length viral genomes. The concatamer junctions contain inverted repeat sequences that can be extruded as cruciforms, yielding Holliday junctions that A22 protein cleaves. This chain is Resolvase OPG149 (OPG149), found in Cynomys gunnisoni (Gunnison's prairie dog).